Consider the following 76-residue polypeptide: Glutathione S-transferase (76 aa).

One can recognise a GST N-terminal domain in the interval 1-40 (XVAFETVPVDLMKGEHKQPAYLALQPFGTVPAVVDGDYXL). The region spanning 41-76 (LSAVLDVYEAHLHGYLAGDFVSLADLAHLPFTDYLV) is the GST C-terminal domain.

The protein belongs to the GST superfamily. Theta family.

It is found in the cytoplasm. It carries out the reaction RX + glutathione = an S-substituted glutathione + a halide anion + H(+). Its function is as follows. Conjugation of reduced glutathione to a wide number of exogenous and endogenous hydrophobic electrophiles. The sequence is that of Glutathione S-transferase from Brassica oleracea var. italica (Broccoli).